We begin with the raw amino-acid sequence, 241 residues long: 4-hydroxy-tetrahydrodipicolinate reductase (241 aa).

NAD(+) contacts are provided by residues 80-82 and 104-107; these read ATT and SANM. H136 functions as the Proton donor/acceptor in the catalytic mechanism. H137 contacts (S)-2,3,4,5-tetrahydrodipicolinate. Catalysis depends on K140, which acts as the Proton donor. 146–147 is a binding site for (S)-2,3,4,5-tetrahydrodipicolinate; that stretch reads GT.

The protein belongs to the DapB family.

It is found in the cytoplasm. The enzyme catalyses (S)-2,3,4,5-tetrahydrodipicolinate + NAD(+) + H2O = (2S,4S)-4-hydroxy-2,3,4,5-tetrahydrodipicolinate + NADH + H(+). The catalysed reaction is (S)-2,3,4,5-tetrahydrodipicolinate + NADP(+) + H2O = (2S,4S)-4-hydroxy-2,3,4,5-tetrahydrodipicolinate + NADPH + H(+). Its pathway is amino-acid biosynthesis; L-lysine biosynthesis via DAP pathway; (S)-tetrahydrodipicolinate from L-aspartate: step 4/4. Catalyzes the conversion of 4-hydroxy-tetrahydrodipicolinate (HTPA) to tetrahydrodipicolinate. The polypeptide is 4-hydroxy-tetrahydrodipicolinate reductase (Staphylococcus haemolyticus (strain JCSC1435)).